Consider the following 299-residue polypeptide: Taste receptor type 2 member 5 (299 aa).

A topological domain (extracellular) is located at residue Met1. Residues 2–22 (LSAGLGLLMLVAVVEFLIGLI) form a helical membrane-spanning segment. Over 23-45 (GNGVLVVWSFREWIRKFSWSSYN) the chain is Cytoplasmic. A helical transmembrane segment spans residues 46–66 (LIILGLAGCRFVLQWLIILDL). The Extracellular segment spans residues 67–82 (SLFPLFQSSRWLRYLS). The chain crosses the membrane as a helical span at residues 83–103 (IFWVLVSQASLWFATFLSVFY). The Cytoplasmic portion of the chain corresponds to 104–127 (CKKITTFDHPAYLWLKQRAYNLSL). A helical membrane pass occupies residues 128-148 (WCLLGYFIINLLLTVQIGLMF). Residues 149–175 (YHPPQGNSSIRYPFESWQYLYAFRLNS) are Extracellular-facing. Residue Asn155 is glycosylated (N-linked (GlcNAc...) asparagine). A helical membrane pass occupies residues 176–196 (GSYLPLMVFLVSSGMLIVSLY). The Cytoplasmic segment spans residues 197–223 (THHKKMKVHSAGRRDVRAKAHITALKS). Residues 224 to 244 (LGCFLLLHLVYIMASPFSIAS) form a helical membrane-spanning segment. Residues 245–253 (KTYPPDLTS) are Extracellular-facing. Residues 254 to 274 (VFIWETLMAAYPSLHSLILIM) form a helical membrane-spanning segment. At 275–299 (GIPRVKQTCQKIXWKTVCARRCWGP) the chain is on the cytoplasmic side.

This sequence belongs to the G-protein coupled receptor T2R family.

The protein resides in the membrane. Its function is as follows. Receptor that may play a role in the perception of bitterness and is gustducin-linked. May play a role in sensing the chemical composition of the gastrointestinal content. The activity of this receptor may stimulate alpha gustducin, mediate PLC-beta-2 activation and lead to the gating of TRPM5. This chain is Taste receptor type 2 member 5 (TAS2R5), found in Pan troglodytes (Chimpanzee).